A 930-amino-acid polypeptide reads, in one-letter code: Isoleucine--tRNA ligase (930 aa).

The 'HIGH' region signature appears at 57 to 67 (PYANGNIHVGH). Glu-554 contributes to the L-isoleucyl-5'-AMP binding site. Residues 595–599 (KMSKS) carry the 'KMSKS' region motif. Lys-598 contacts ATP. Cys-888, Cys-891, Cys-908, and Cys-911 together coordinate Zn(2+).

Belongs to the class-I aminoacyl-tRNA synthetase family. IleS type 1 subfamily. In terms of assembly, monomer. Requires Zn(2+) as cofactor.

Its subcellular location is the cytoplasm. It catalyses the reaction tRNA(Ile) + L-isoleucine + ATP = L-isoleucyl-tRNA(Ile) + AMP + diphosphate. Functionally, catalyzes the attachment of isoleucine to tRNA(Ile). As IleRS can inadvertently accommodate and process structurally similar amino acids such as valine, to avoid such errors it has two additional distinct tRNA(Ile)-dependent editing activities. One activity is designated as 'pretransfer' editing and involves the hydrolysis of activated Val-AMP. The other activity is designated 'posttransfer' editing and involves deacylation of mischarged Val-tRNA(Ile). In Streptococcus sanguinis (strain SK36), this protein is Isoleucine--tRNA ligase.